Here is a 670-residue protein sequence, read N- to C-terminus: DNA ligase (670 aa).

NAD(+) contacts are provided by residues 32–36, 81–82, and Glu-110; these read DAEYD and SL. Lys-112 serves as the catalytic N6-AMP-lysine intermediate. 4 residues coordinate NAD(+): Arg-133, Glu-170, Lys-289, and Lys-313. The Zn(2+) site is built by Cys-407, Cys-410, Cys-425, and Cys-431. Residues 590–670 enclose the BRCT domain; sequence ESQLSLKGQT…ALMDLLNAAN (81 aa).

This sequence belongs to the NAD-dependent DNA ligase family. LigA subfamily. Requires Mg(2+) as cofactor. Mn(2+) serves as cofactor.

The catalysed reaction is NAD(+) + (deoxyribonucleotide)n-3'-hydroxyl + 5'-phospho-(deoxyribonucleotide)m = (deoxyribonucleotide)n+m + AMP + beta-nicotinamide D-nucleotide.. Functionally, DNA ligase that catalyzes the formation of phosphodiester linkages between 5'-phosphoryl and 3'-hydroxyl groups in double-stranded DNA using NAD as a coenzyme and as the energy source for the reaction. It is essential for DNA replication and repair of damaged DNA. The polypeptide is DNA ligase (Shewanella frigidimarina (strain NCIMB 400)).